Consider the following 157-residue polypeptide: MAKVESFTLDHTKVKAPYVRLITEETGKKGDVISNYDLRLVQPNTNAIPTAGLHTIEHLLAGLLRDRLDGVIDCSPFGCRTGFHLITWGKHSTTEVAKALKGSLEAIANDIEWKDVQGTDKYSCGNYRDHSLFSAKEWSKEILSQGISDQPFERHVI.

Positions 54, 58, and 124 each coordinate Fe cation.

Belongs to the LuxS family. Homodimer. It depends on Fe cation as a cofactor.

It catalyses the reaction S-(5-deoxy-D-ribos-5-yl)-L-homocysteine = (S)-4,5-dihydroxypentane-2,3-dione + L-homocysteine. Involved in the synthesis of autoinducer 2 (AI-2) which is secreted by bacteria and is used to communicate both the cell density and the metabolic potential of the environment. The regulation of gene expression in response to changes in cell density is called quorum sensing. Catalyzes the transformation of S-ribosylhomocysteine (RHC) to homocysteine (HC) and 4,5-dihydroxy-2,3-pentadione (DPD). In Lactobacillus helveticus (strain DPC 4571), this protein is S-ribosylhomocysteine lyase.